We begin with the raw amino-acid sequence, 284 residues long: Shikimate dehydrogenase (NADP(+)) (284 aa).

Shikimate-binding positions include 19–21 and T66; that span reads SFS. Residue K70 is the Proton acceptor of the active site. D82 is an NADP(+) binding site. N91 and D106 together coordinate shikimate. NADP(+)-binding positions include 130-134 and I226; that span reads GSGGS. Position 228 (Y228) interacts with shikimate. An NADP(+)-binding site is contributed by G249.

This sequence belongs to the shikimate dehydrogenase family. As to quaternary structure, homodimer.

The catalysed reaction is shikimate + NADP(+) = 3-dehydroshikimate + NADPH + H(+). Its pathway is metabolic intermediate biosynthesis; chorismate biosynthesis; chorismate from D-erythrose 4-phosphate and phosphoenolpyruvate: step 4/7. Its function is as follows. Involved in the biosynthesis of the chorismate, which leads to the biosynthesis of aromatic amino acids. Catalyzes the reversible NADPH linked reduction of 3-dehydroshikimate (DHSA) to yield shikimate (SA). In Methanococcus vannielii (strain ATCC 35089 / DSM 1224 / JCM 13029 / OCM 148 / SB), this protein is Shikimate dehydrogenase (NADP(+)).